Reading from the N-terminus, the 221-residue chain is Adenylate kinase (221 aa).

10 to 15 (GAGKGT) contacts ATP. Positions 30–59 (STGDMLRAAVKAGTPLGVEAKKVMDAGGLV) are NMP. Residues Thr31, Arg36, 57 to 59 (GLV), 85 to 88 (GFPR), and Gln92 contribute to the AMP site. The tract at residues 122–159 (GRRVHVASGRTYHLKYNPPKTEGVDDETGEPLIQRDDD) is LID. Residues Arg123 and 132–133 (TY) each bind ATP. The disordered stretch occupies residues 138–159 (NPPKTEGVDDETGEPLIQRDDD). AMP contacts are provided by Arg156 and Arg167. ATP is bound at residue Gly207.

The protein belongs to the adenylate kinase family. In terms of assembly, monomer.

Its subcellular location is the cytoplasm. It carries out the reaction AMP + ATP = 2 ADP. Its pathway is purine metabolism; AMP biosynthesis via salvage pathway; AMP from ADP: step 1/1. Functionally, catalyzes the reversible transfer of the terminal phosphate group between ATP and AMP. Plays an important role in cellular energy homeostasis and in adenine nucleotide metabolism. In Cupriavidus taiwanensis (strain DSM 17343 / BCRC 17206 / CCUG 44338 / CIP 107171 / LMG 19424 / R1) (Ralstonia taiwanensis (strain LMG 19424)), this protein is Adenylate kinase.